A 294-amino-acid chain; its full sequence is Homoserine kinase (294 aa).

ATP is bound at residue 84-94; that stretch reads PFSRGLGSSSA.

Belongs to the GHMP kinase family. Homoserine kinase subfamily.

The protein resides in the cytoplasm. The catalysed reaction is L-homoserine + ATP = O-phospho-L-homoserine + ADP + H(+). The protein operates within amino-acid biosynthesis; L-threonine biosynthesis; L-threonine from L-aspartate: step 4/5. In terms of biological role, catalyzes the ATP-dependent phosphorylation of L-homoserine to L-homoserine phosphate. The sequence is that of Homoserine kinase from Campylobacter concisus (strain 13826).